A 55-amino-acid polypeptide reads, in one-letter code: Large ribosomal subunit protein bL33 (55 aa).

Belongs to the bacterial ribosomal protein bL33 family.

The protein is Large ribosomal subunit protein bL33 of Rhizorhabdus wittichii (strain DSM 6014 / CCUG 31198 / JCM 15750 / NBRC 105917 / EY 4224 / RW1) (Sphingomonas wittichii).